Here is a 155-residue protein sequence, read N- to C-terminus: Ribosomal RNA large subunit methyltransferase H (155 aa).

Gly-103 lines the S-adenosyl-L-methionine pocket.

This sequence belongs to the RNA methyltransferase RlmH family. In terms of assembly, homodimer.

Its subcellular location is the cytoplasm. The catalysed reaction is pseudouridine(1915) in 23S rRNA + S-adenosyl-L-methionine = N(3)-methylpseudouridine(1915) in 23S rRNA + S-adenosyl-L-homocysteine + H(+). Specifically methylates the pseudouridine at position 1915 (m3Psi1915) in 23S rRNA. The polypeptide is Ribosomal RNA large subunit methyltransferase H (Caulobacter vibrioides (strain ATCC 19089 / CIP 103742 / CB 15) (Caulobacter crescentus)).